The following is a 770-amino-acid chain: Probable copper-exporting P-type ATPase V (770 aa).

The HMA domain maps to 1–66; the sequence is MRVCVTGFNV…AITKAQHVPA (66 aa). Positions 103-130 are disordered; sequence DKPLKASRCGGRPRGPVRGSASWPGEQN. Positions 110–121 are enriched in low complexity; it reads RCGGRPRGPVRG. Helical transmembrane passes span 141 to 161, 164 to 184, 193 to 213, 217 to 237, 377 to 397, and 402 to 422; these read VWLA…FGAY, AGWL…WPIL, ALTS…FVYS, LFAG…FVVL, AVFV…WTLI, and VAGM…ALGL. Asp-460 (4-aspartylphosphate intermediate) is an active-site residue. Mg(2+)-binding residues include Asp-660 and Asp-664. A run of 2 helical transmembrane segments spans residues 718–737 and 741–760; these read LGWA…LGAL and VAGA…SLRL.

The protein belongs to the cation transport ATPase (P-type) (TC 3.A.3) family. Type IB subfamily.

The protein localises to the cell membrane. The catalysed reaction is Cu(+)(in) + ATP + H2O = Cu(+)(out) + ADP + phosphate + H(+). Its function is as follows. Necessary for copper homeostasis and likely functions as a copper exporter. Also required for full virulence. This Mycobacterium tuberculosis (strain CDC 1551 / Oshkosh) protein is Probable copper-exporting P-type ATPase V (ctpV).